Here is a 24-residue protein sequence, read N- to C-terminus: U4-ctenitoxin-Co1b (24 aa).

Post-translationally, disulfide bonds are present. As to expression, expressed by the venom gland.

The protein localises to the secreted. Its function is as follows. Omega-agatoxins are antagonists of voltage-gated calcium channels (Cav). The chain is U4-ctenitoxin-Co1b from Ctenus ornatus (Brazilian spider).